The chain runs to 430 residues: Enolase (430 aa).

A (2R)-2-phosphoglycerate-binding site is contributed by Gln-166. Glu-208 acts as the Proton donor in catalysis. The Mg(2+) site is built by Asp-245, Glu-288, and Asp-315. (2R)-2-phosphoglycerate is bound by residues Lys-340, Arg-369, Ser-370, and Lys-391. Residue Lys-340 is the Proton acceptor of the active site.

It belongs to the enolase family. Requires Mg(2+) as cofactor.

It is found in the cytoplasm. The protein resides in the secreted. Its subcellular location is the cell surface. The enzyme catalyses (2R)-2-phosphoglycerate = phosphoenolpyruvate + H2O. It participates in carbohydrate degradation; glycolysis; pyruvate from D-glyceraldehyde 3-phosphate: step 4/5. Functionally, catalyzes the reversible conversion of 2-phosphoglycerate (2-PG) into phosphoenolpyruvate (PEP). It is essential for the degradation of carbohydrates via glycolysis. This chain is Enolase, found in Clostridium beijerinckii (strain ATCC 51743 / NCIMB 8052) (Clostridium acetobutylicum).